The sequence spans 351 residues: Histidinol-phosphate aminotransferase (351 aa).

The residue at position 213 (Lys-213) is an N6-(pyridoxal phosphate)lysine.

It belongs to the class-II pyridoxal-phosphate-dependent aminotransferase family. Histidinol-phosphate aminotransferase subfamily. As to quaternary structure, homodimer. Requires pyridoxal 5'-phosphate as cofactor.

The enzyme catalyses L-histidinol phosphate + 2-oxoglutarate = 3-(imidazol-4-yl)-2-oxopropyl phosphate + L-glutamate. It participates in amino-acid biosynthesis; L-histidine biosynthesis; L-histidine from 5-phospho-alpha-D-ribose 1-diphosphate: step 7/9. This Clostridium kluyveri (strain NBRC 12016) protein is Histidinol-phosphate aminotransferase.